The following is a 429-amino-acid chain: Cholesterol 7-desaturase nvd (429 aa).

Residues 23 to 43 (FVICLWTLAVTFIRIYWIFFV) traverse the membrane as a helical segment. The 104-residue stretch at 98 to 201 (YGILKSSQLK…SQEVDGFIFI (104 aa)) folds into the Rieske domain. Cys138, His140, Cys158, and His161 together coordinate [2Fe-2S] cluster.

Belongs to the cholesterol 7-desaturase family. It depends on [2Fe-2S] cluster as a cofactor. As to expression, expressed predominantly in the prothoracic gland and weakly in brain and malpighian tubules.

It is found in the membrane. The catalysed reaction is cholesterol + NADPH + O2 + H(+) = 7-dehydrocholesterol + NADP(+) + 2 H2O. The enzyme catalyses cholesterol + NADH + O2 + H(+) = 7-dehydrocholesterol + NAD(+) + 2 H2O. It participates in steroid hormone biosynthesis; dafachronic acid biosynthesis. Its function is as follows. Catalyzes the production of 7-dehydrocholesterol (7-DHC or cholesta-5,7-dien-3beta-ol) by inserting a double bond (desaturating) at the C7-C8 single bond of cholesterol. Essential regulator of steroid biosynthesis, as this reaction is the first step in the synthesis of the steroid hormone Delta(7)-dafachronic acid. Required for insect molting, metamorphosis and body growth throughout development via the regulation of ecdysteroid biosynthesis in the prothoracic gland. This Drosophila melanogaster (Fruit fly) protein is Cholesterol 7-desaturase nvd.